Consider the following 477-residue polypeptide: Mitochondrial adenyl nucleotide antiporter SLC25A24 (477 aa).

A regulatory N-terminal domain region spans residues 1 to 173 (MLRWLRDFVL…RFWKHSTGID (173 aa)). Residues 1–197 (MLRWLRDFVL…EKKSGQWWRQ (197 aa)) are Mitochondrial intermembrane-facing. EF-hand domains follow at residues 19–54 (EQPTRYETLFQALDRNGDGVVDIGELQEGLRNLGIP), 55–88 (LGQDAEEKIFTTGDVNKDGKLDFEEFMKYLKDHE), 86–121 (DHEKKMKLAFKSLDKNNDGKIEASEIVQSLQTLGLT), and 122–157 (ISEQQAELILQSIDVDGTMTVDWNEWRDYFLFNPVT). The Ca(2+) site is built by D32, N34, D36, V38, E43, D68, N70, D72, K74, E79, D99, N101, D103, K105, E110, D135, D137, T139, T141, and E146. The segment at 159 to 168 (IEEIIRFWKH) is linker region. The C-terminal transmembrane transporter domain stretch occupies residues 174–477 (IGDSLTIPDE…MKQTLGVTQK (304 aa)). Solcar repeat units follow at residues 192-278 (GQWW…YKKL), 286-371 (IGTF…LKSY), and 383-471 (PGVM…MKQT). A helical membrane pass occupies residues 198-215 (LLAGGIAGAVSRTSTAPL). Residues 216–252 (DRLKIMMQVHGSKSDKMNIFGGFRQMVKEGGIRSLWR) lie on the Mitochondrial matrix side of the membrane. The chain crosses the membrane as a helical span at residues 253–272 (GNGTNVIKIAPETAVKFWAY). At 273-295 (EQYKKLLTEEGQKIGTFERFISG) the chain is on the mitochondrial intermembrane side. Residues 296 to 309 (SMAGATAQTFIYPM) form a helical membrane-spanning segment. Over 310–345 (EVMKTRLAVGKTGQYSGIYDCAKKILKHEGLGAFYK) the chain is Mitochondrial matrix. K320 carries the N6-acetyllysine; alternate modification. Position 320 is an N6-succinyllysine; alternate (K320). The residue at position 336 (K336) is an N6-acetyllysine. A helical transmembrane segment spans residues 346 to 365 (GYVPNLLGIIPYAGIDLAVY). The Mitochondrial intermembrane segment spans residues 366 to 388 (ELLKSYWLDNFAKDSVNPGVMVL). A helical membrane pass occupies residues 389–406 (LGCGALSSTCGQLASYPL). Topologically, residues 407–445 (ALVRTRMQAQAMLEGSPQLNMVGLFRRIISKEGIPGLYR) are mitochondrial matrix. An N6-acetyllysine; alternate modification is found at K437. The residue at position 437 (K437) is an N6-succinyllysine; alternate. The chain crosses the membrane as a helical span at residues 446 to 465 (GITPNFMKVLPAVGISYVVY). Over 466-477 (ENMKQTLGVTQK) the chain is Mitochondrial intermembrane.

This sequence belongs to the mitochondrial carrier (TC 2.A.29) family. Monomer. Expressed in all tissues tested. Highly expressed in testis, expressed at intermediate level in small intestine and pancreas, and weakly expressed in kidney, spleen, liver, skeletal muscle and heart.

Its subcellular location is the mitochondrion inner membrane. The catalysed reaction is Mg(2+)(out) + phosphate(in) + ATP(out) = Mg(2+)(in) + phosphate(out) + ATP(in). It carries out the reaction ADP(out) + phosphate(in) + H(+)(out) = ADP(in) + phosphate(out) + H(+)(in). It catalyses the reaction AMP(out) + phosphate(in) = AMP(in) + phosphate(out). The enzyme catalyses phosphate(in) + ATP(out) + 2 H(+)(out) = phosphate(out) + ATP(in) + 2 H(+)(in). The catalysed reaction is dADP(in) + ADP(out) = dADP(out) + ADP(in). It carries out the reaction Mg(2+)(in) + ADP(out) + ATP(in) + H(+)(out) = Mg(2+)(out) + ADP(in) + ATP(out) + H(+)(in). It catalyses the reaction ADP(out) + diphosphate(in) = ADP(in) + diphosphate(out). The enzyme catalyses dAMP(in) + ADP(out) + H(+)(out) = dAMP(out) + ADP(in) + H(+)(in). The catalysed reaction is 3'-AMP(in) + ADP(out) + H(+)(out) = 3'-AMP(out) + ADP(in) + H(+)(in). It carries out the reaction dAMP(out) + phosphate(in) = dAMP(in) + phosphate(out). It catalyses the reaction 3'-AMP(out) + phosphate(in) = 3'-AMP(in) + phosphate(out). The enzyme catalyses dADP(out) + phosphate(in) + H(+)(out) = dADP(in) + phosphate(out) + H(+)(in). With respect to regulation, activated by an increase in cytosolic calcium levels that induce a conformational change of the N-terminal regulatory domain, uncapping the channel and allowing transport. Inhibited by bathophenanthroline, mersalyl, p-hydroxymercuribenzoate, bromcresol purple and tannic acid. Functionally, electroneutral antiporter that mediates the transport of adenyl nucleotides through the inner mitochondrial membrane. Originally identified as an ATP-magnesium/inorganic phosphate antiporter, it also acts as a broad specificity adenyl nucleotide antiporter. By regulating the mitochondrial matrix adenyl nucleotide pool could adapt to changing cellular energetic demands and indirectly regulate adenyl nucleotide-dependent metabolic pathways. In vitro, a low activity is also observed with guanyl and pyrimidine nucleotides. May play a role in protecting cells against oxidative stress-induced cell death, by buffering calcium levels in the mitochondrial matrix through the formation of calcium-phosphate precipitates. This is Mitochondrial adenyl nucleotide antiporter SLC25A24 from Homo sapiens (Human).